We begin with the raw amino-acid sequence, 83 residues long: Alpha-neurotoxin NTX-3 (83 aa).

An N-terminal signal peptide occupies residues 1-21; the sequence is MKTLLLTLLVVTIVCLDLGYT. 4 cysteine pairs are disulfide-bonded: cysteine 24–cysteine 45, cysteine 38–cysteine 62, cysteine 64–cysteine 75, and cysteine 76–cysteine 81.

It belongs to the three-finger toxin family. Short-chain subfamily. Type I alpha-neurotoxin sub-subfamily. As to expression, expressed by the venom gland.

The protein resides in the secreted. Its function is as follows. Binds to muscle nicotinic acetylcholine receptor (nAChR) and inhibit acetylcholine from binding to the receptor, thereby impairing neuromuscular transmission. This Naja sputatrix (Malayan spitting cobra) protein is Alpha-neurotoxin NTX-3.